The sequence spans 293 residues: D-alanine--D-alanine ligase (293 aa).

The region spanning 98–291 (KIIWKQHNLT…FNKLVVAIIN (194 aa)) is the ATP-grasp domain. 124-177 (DFPLPWMVKPTLEGSSIGISKVDSQIQLNNALMLAWQYNSHALIEQWIEGDEYT) provides a ligand contact to ATP. Mg(2+)-binding residues include Asp245, Glu258, and Asn260.

Belongs to the D-alanine--D-alanine ligase family. Mg(2+) serves as cofactor. The cofactor is Mn(2+).

It localises to the cytoplasm. The catalysed reaction is 2 D-alanine + ATP = D-alanyl-D-alanine + ADP + phosphate + H(+). It participates in cell wall biogenesis; peptidoglycan biosynthesis. Functionally, cell wall formation. The sequence is that of D-alanine--D-alanine ligase from Ruthia magnifica subsp. Calyptogena magnifica.